We begin with the raw amino-acid sequence, 264 residues long: S-adenosylmethionine decarboxylase proenzyme (264 aa).

The active-site Schiff-base intermediate with substrate; via pyruvic acid is the Ser112. Residue Ser112 is modified to Pyruvic acid (Ser); by autocatalysis. His117 serves as the catalytic Proton acceptor; for processing activity. Cys140 (proton donor; for catalytic activity) is an active-site residue.

This sequence belongs to the prokaryotic AdoMetDC family. Type 2 subfamily. As to quaternary structure, heterooctamer of four alpha and four beta chains arranged as a tetramer of alpha/beta heterodimers. It depends on pyruvate as a cofactor. In terms of processing, is synthesized initially as an inactive proenzyme. Formation of the active enzyme involves a self-maturation process in which the active site pyruvoyl group is generated from an internal serine residue via an autocatalytic post-translational modification. Two non-identical subunits are generated from the proenzyme in this reaction, and the pyruvate is formed at the N-terminus of the alpha chain, which is derived from the carboxyl end of the proenzyme. The post-translation cleavage follows an unusual pathway, termed non-hydrolytic serinolysis, in which the side chain hydroxyl group of the serine supplies its oxygen atom to form the C-terminus of the beta chain, while the remainder of the serine residue undergoes an oxidative deamination to produce ammonia and the pyruvoyl group blocking the N-terminus of the alpha chain.

The enzyme catalyses S-adenosyl-L-methionine + H(+) = S-adenosyl 3-(methylsulfanyl)propylamine + CO2. Its pathway is amine and polyamine biosynthesis; S-adenosylmethioninamine biosynthesis; S-adenosylmethioninamine from S-adenosyl-L-methionine: step 1/1. Functionally, catalyzes the decarboxylation of S-adenosylmethionine to S-adenosylmethioninamine (dcAdoMet), the propylamine donor required for the synthesis of the polyamines spermine and spermidine from the diamine putrescine. The polypeptide is S-adenosylmethionine decarboxylase proenzyme (Salmonella agona (strain SL483)).